A 682-amino-acid polypeptide reads, in one-letter code: ATP-dependent DNA helicase RecG (682 aa).

The interval 46-139 (ELRDLEEVKH…LKNGPHQEDK (94 aa)) is wedge domain. The Helicase ATP-binding domain maps to 271–432 (DMSSPYRMNR…VFGEMDVSVI (162 aa)). An ATP-binding site is contributed by 284–291 (GDVGSGKT). Positions 385–388 (DEQH) match the DEAH box motif. One can recognise a Helicase C-terminal domain in the interval 451 to 611 (MLDRILAFVE…GFELSEKDLE (161 aa)).

It belongs to the helicase family. RecG subfamily. Monomer. Interacts with SSB (sbbA), via the latter's 6 C-terminal residues. Colocalizes with DNA pol III subunit gamma/tau (dnaX).

The protein resides in the cytoplasm. It localises to the nucleoid. The enzyme catalyses Couples ATP hydrolysis with the unwinding of duplex DNA by translocating in the 3'-5' direction.. It catalyses the reaction ATP + H2O = ADP + phosphate + H(+). Replication fork regression on Holliday junctions (HJ) is inhibited by DisA; DisA inhibits the ATPase activity of RecG. Critical role in recombination and DNA repair. Helps process Holliday junction intermediates to mature products by catalyzing branch migration. Has a DNA unwinding activity characteristic of a DNA helicase with 3'-5' polarity. Unwinds branched duplex DNA (Y-DNA), Holliday junction (HJ) DNA and partially replicated forks as well as catalyzing fork reversal/regression. Does not seem to unwind R-loops. Inhibits the diadenylate cyclase (DAC) activity of DisA in the presence but not absence of HJ DNA, possibly by relocating DisA from the junction. The sequence is that of ATP-dependent DNA helicase RecG from Bacillus subtilis (strain 168).